A 92-amino-acid polypeptide reads, in one-letter code: MEQYEDKSGLLLVQLNQLSDNRSKKVLQGFVKDVLTYEKSKIGTQLTDSETELGVSKSLVQSSKQQNISSTYFLDLCNKHIINSEFTSSYLY.

This is an uncharacterized protein from Dictyostelium discoideum (Social amoeba).